The following is a 72-amino-acid chain: Small ribosomal subunit protein bS20 (72 aa).

This sequence belongs to the bacterial ribosomal protein bS20 family.

Its function is as follows. Binds directly to 16S ribosomal RNA. The sequence is that of Small ribosomal subunit protein bS20 (rpsT) from Aeromonas hydrophila.